A 388-amino-acid chain; its full sequence is Beta-1,4-galactosyltransferase 5 (388 aa).

The Cytoplasmic portion of the chain corresponds to 1–14 (MRVRRGLLRLPRRS). Residues 15–35 (LLAALFFFSLSSSLLYFVYVA) form a helical; Signal-anchor for type II membrane protein membrane-spanning segment. The Lumenal segment spans residues 36-388 (PGIVNTYLFM…TPELAQVTEY (353 aa)). Asn-77, Asn-81, Asn-90, Asn-111, and Asn-128 each carry an N-linked (GlcNAc...) asparagine glycan. Cys-114 and Cys-158 are oxidised to a cystine. UDP-alpha-D-galactose is bound by residues 169–173 (PFRNR), 208–210 (FNR), 235–236 (VD), Tyr-264, and Trp-296. Cysteines 229 and 248 form a disulfide. Residue Asp-236 coordinates Mn(2+). Position 298-301 (298-301 (GEDD)) interacts with N-acetyl-D-glucosamine. 329-330 (YH) is a UDP-alpha-D-galactose binding site. Arg-340 is a binding site for N-acetyl-D-glucosamine. N-linked (GlcNAc...) asparagine glycosylation is found at Asn-364 and Asn-373.

This sequence belongs to the glycosyltransferase 7 family. (Microbial infection) Interacts with porcine reproductive and respiratory syndrome virus GP5. Mn(2+) serves as cofactor.

The protein localises to the golgi apparatus. The protein resides in the golgi stack membrane. It carries out the reaction a beta-D-glucosyl-(1&lt;-&gt;1')-N-acylsphing-4-enine + UDP-alpha-D-galactose = a beta-D-Gal-(1-&gt;4)-beta-D-Glc-(1&lt;-&gt;1)-Cer(d18:1(4E)) + UDP + H(+). The protein operates within protein modification; protein glycosylation. It participates in sphingolipid metabolism. In terms of biological role, catalyzes the synthesis of lactosylceramide (LacCer) via the transfer of galactose from UDP-galactose to glucosylceramide (GlcCer). LacCer is the starting point in the biosynthesis of all gangliosides (membrane-bound glycosphingolipids) which play pivotal roles in the CNS including neuronal maturation and axonal and myelin formation. Plays a role in the glycosylation of BMPR1A and regulation of its protein stability. Essential for extraembryonic development during early embryogenesis. (Microbial infection) May play a role in the glycosylation of porcine reproductive and respiratory syndrome virus GP5 protein and may be involved in the regulation of viral proliferation. The chain is Beta-1,4-galactosyltransferase 5 (B4GALT5) from Sus scrofa (Pig).